The sequence spans 366 residues: Outer membrane porin C 2 (366 aa).

Residues 1–21 form the signal peptide; it reads MKLKIVAVVVTGLLAANVAHA.

This sequence belongs to the Gram-negative porin family. As to quaternary structure, homotrimer. Forms mixed heterotrimers with OmpF and with PhoE; other mixed heterotrimers are also probable.

It is found in the cell outer membrane. Forms pores that allow passive diffusion of small molecules across the outer membrane. Plays a role in virulence. The protein is Outer membrane porin C 2 of Shigella flexneri serotype 5a (strain M90T).